Here is a 158-residue protein sequence, read N- to C-terminus: Cyclic pyranopterin monophosphate synthase (158 aa).

Residues 76 to 78 and 114 to 115 contribute to the substrate site; these read LCH and ME. Asp129 is a catalytic residue.

It belongs to the MoaC family. In terms of assembly, homohexamer; trimer of dimers.

It carries out the reaction (8S)-3',8-cyclo-7,8-dihydroguanosine 5'-triphosphate = cyclic pyranopterin phosphate + diphosphate. It functions in the pathway cofactor biosynthesis; molybdopterin biosynthesis. In terms of biological role, catalyzes the conversion of (8S)-3',8-cyclo-7,8-dihydroguanosine 5'-triphosphate to cyclic pyranopterin monophosphate (cPMP). The protein is Cyclic pyranopterin monophosphate synthase of Shewanella frigidimarina (strain NCIMB 400).